The primary structure comprises 162 residues: Large ribosomal subunit protein uL10 (162 aa).

The protein belongs to the universal ribosomal protein uL10 family. Part of the ribosomal stalk of the 50S ribosomal subunit. The N-terminus interacts with L11 and the large rRNA to form the base of the stalk. The C-terminus forms an elongated spine to which L12 dimers bind in a sequential fashion forming a multimeric L10(L12)X complex.

Its function is as follows. Forms part of the ribosomal stalk, playing a central role in the interaction of the ribosome with GTP-bound translation factors. The chain is Large ribosomal subunit protein uL10 from Borreliella afzelii (strain PKo) (Borrelia afzelii).